Here is a 316-residue protein sequence, read N- to C-terminus: Ribosomal RNA small subunit methyltransferase H (316 aa).

Residues 35–37, Asp55, Phe79, Asp101, and Gln108 each bind S-adenosyl-L-methionine; that span reads GGH. Positions 291-316 are disordered; sequence ALKPSDQEVELNPRSRSSVLRVAEKL.

It belongs to the methyltransferase superfamily. RsmH family.

The protein resides in the cytoplasm. It catalyses the reaction cytidine(1402) in 16S rRNA + S-adenosyl-L-methionine = N(4)-methylcytidine(1402) in 16S rRNA + S-adenosyl-L-homocysteine + H(+). Specifically methylates the N4 position of cytidine in position 1402 (C1402) of 16S rRNA. The polypeptide is Ribosomal RNA small subunit methyltransferase H (Vibrio cholerae serotype O1 (strain ATCC 39315 / El Tor Inaba N16961)).